The following is a 1241-amino-acid chain: ATP-dependent helicase/nuclease subunit A (1241 aa).

In terms of domain architecture, UvrD-like helicase ATP-binding spans Ser12–Arg485. An ATP-binding site is contributed by Ala33–Thr40. Residues Gly505–Gly805 enclose the UvrD-like helicase C-terminal domain.

Belongs to the helicase family. AddA subfamily. As to quaternary structure, heterodimer of AddA and AddB/RexB. Requires Mg(2+) as cofactor.

The catalysed reaction is Couples ATP hydrolysis with the unwinding of duplex DNA by translocating in the 3'-5' direction.. It carries out the reaction ATP + H2O = ADP + phosphate + H(+). The heterodimer acts as both an ATP-dependent DNA helicase and an ATP-dependent, dual-direction single-stranded exonuclease. Recognizes the chi site generating a DNA molecule suitable for the initiation of homologous recombination. The AddA nuclease domain is required for chi fragment generation; this subunit has the helicase and 3' -&gt; 5' nuclease activities. This Bacillus cereus (strain AH187) protein is ATP-dependent helicase/nuclease subunit A.